Consider the following 338-residue polypeptide: Lipoate-protein ligase A (338 aa).

In terms of domain architecture, BPL/LPL catalytic spans 29–216; sequence PATQRVLFLW…AFFAHYGERV (188 aa). Residues Arg-71, 76–79, and Lys-134 each bind ATP; that span reads GAVF. Residue Lys-134 coordinates (R)-lipoate.

Belongs to the LplA family. In terms of assembly, monomer.

It is found in the cytoplasm. The enzyme catalyses L-lysyl-[lipoyl-carrier protein] + (R)-lipoate + ATP = N(6)-[(R)-lipoyl]-L-lysyl-[lipoyl-carrier protein] + AMP + diphosphate + H(+). It participates in protein modification; protein lipoylation via exogenous pathway; protein N(6)-(lipoyl)lysine from lipoate: step 1/2. Its pathway is protein modification; protein lipoylation via exogenous pathway; protein N(6)-(lipoyl)lysine from lipoate: step 2/2. Its function is as follows. Catalyzes both the ATP-dependent activation of exogenously supplied lipoate to lipoyl-AMP and the transfer of the activated lipoyl onto the lipoyl domains of lipoate-dependent enzymes. This chain is Lipoate-protein ligase A, found in Escherichia fergusonii (strain ATCC 35469 / DSM 13698 / CCUG 18766 / IAM 14443 / JCM 21226 / LMG 7866 / NBRC 102419 / NCTC 12128 / CDC 0568-73).